The sequence spans 371 residues: T-cell acute lymphocytic leukemia protein 1 (371 aa).

Positions 1 to 71 (MMEKRQPELC…DVPLQNSSNG (71 aa)) are disordered. Over residues 34–57 (GCKEDEESKREEGDKEGGGRFKGD) the composition is skewed to basic and acidic residues. The 53-residue stretch at 204–256 (VRRIFTNSRERWRQQNVNGAFAELRKLIPTHPPDKKLSKNEILRLAMKYISFL) folds into the bHLH domain. The disordered stretch occupies residues 263–371 (QDGGRNVSST…GRPLDGSSRR (109 aa)). Residues 293 to 305 (HQDRVVGLARDDI) show a composition bias toward basic and acidic residues. Acidic residues predominate over residues 321–335 (GDADGSPESFMEDQD).

In terms of tissue distribution, expressed in the main hemopoietic organs in adults, namely the kidney and the spleen. Also expressed in the liver, brain, gill and gonads.

Its subcellular location is the nucleus. Functionally, transcription factor that plays a pivotal role in hemopoietic and endothelial development. This chain is T-cell acute lymphocytic leukemia protein 1, found in Takifugu rubripes (Japanese pufferfish).